Here is a 206-residue protein sequence, read N- to C-terminus: Transcriptional regulator GfcR (206 aa).

It belongs to the purine/pyrimidine phosphoribosyltransferase family. GfcR subfamily.

In Methanosphaerula palustris (strain ATCC BAA-1556 / DSM 19958 / E1-9c), this protein is Transcriptional regulator GfcR.